Here is a 586-residue protein sequence, read N- to C-terminus: Frizzled-10-A (586 aa).

An N-terminal signal peptide occupies residues 1–26 (MDVSGVTGLLRGTALLLVLAAALCSA). The Extracellular segment spans residues 27–230 (ISSINPDRSG…DVYWSKDDKK (204 aa)). Positions 35–156 (SGDGRCQAIE…NDPNYLCMEA (122 aa)) constitute an FZ domain. Cystine bridges form between Cys40–Cys101, Cys48–Cys94, Cys85–Cys123, Cys112–Cys153, and Cys116–Cys140. N-linked (GlcNAc...) asparagine glycosylation is present at Asn54. Residue Asn159 is glycosylated (N-linked (GlcNAc...) asparagine). The tract at residues 161 to 199 (TDETPRGSSMLPPIFRPQRPSSGHEIYPKDPTSRSSCEN) is disordered. The chain crosses the membrane as a helical span at residues 231–251 (FAFIWIAIWSILCFFSSAFTV). The Cytoplasmic portion of the chain corresponds to 252–267 (LTFLVDPLRFKYPERP). A helical membrane pass occupies residues 268–288 (IIFLSMCYCVYSVGYIIRLFA). The Extracellular portion of the chain corresponds to 289-315 (GADSIACDRDSGQLYVIQEGLESTGCT). Residues 316 to 336 (IVFLILYYFGMASSLWWVILT) form a helical membrane-spanning segment. Topologically, residues 337-356 (LTWFLAAGKKWGHEAIEANS) are cytoplasmic. The chain crosses the membrane as a helical span at residues 357 to 377 (SYFHLAAWAIPAVKTIMILVM). Over 378–401 (RRVAGDELTGVCYVGSMDVNALTG) the chain is Extracellular. The chain crosses the membrane as a helical span at residues 402 to 422 (FVLIPLACYLIIGTSFILSGF). Topologically, residues 423–448 (VALFHIRRVMKTGGENTDKLEKLMVR) are cytoplasmic. A helical transmembrane segment spans residues 449 to 469 (IGVFSVLYTVPATCVIACYFY). At 470 to 507 (ERLNMDFWKILATQDKCKMDSQTKTLDCTMTSSIPAVE) the chain is on the extracellular side. A helical membrane pass occupies residues 508–528 (IFMVKIFMLLVVGITSGMWIW). The Cytoplasmic portion of the chain corresponds to 529-586 (TSKTVQSWQNVFSKRLKKRNRSKPASVITSAGIYKKPQHPPKVHHGKYESALQSPTCV). The Lys-Thr-X-X-X-Trp motif, mediates interaction with the PDZ domain of Dvl family members motif lies at 531-536 (KTVQSW). The tract at residues 563–586 (KKPQHPPKVHHGKYESALQSPTCV) is disordered. Over residues 564–573 (KPQHPPKVHH) the composition is skewed to basic residues. Positions 584–586 (TCV) match the PDZ-binding motif.

Belongs to the G-protein coupled receptor Fz/Smo family. As to expression, expressed in liver, lung, brain, testis, stomach, kidney, eye, skeletal muscle and skin.

It is found in the cell membrane. Its function is as follows. Receptor for Wnt proteins. Most of frizzled receptors are coupled to the beta-catenin canonical signaling pathway, which leads to the activation of disheveled proteins, inhibition of GSK-3 kinase, nuclear accumulation of beta-catenin and activation of Wnt target genes. A second signaling pathway involving PKC and calcium fluxes has been seen for some family members, but it is not yet clear if it represents a distinct pathway or if it can be integrated in the canonical pathway, as PKC seems to be required for Wnt-mediated inactivation of GSK-3 kinase. Both pathways seem to involve interactions with G-proteins. May be involved in transduction and intercellular transmission of polarity information during tissue morphogenesis and/or in differentiated tissues. Activated by Wnt8. Could have an antagonizing activity in the morphogenesis during development. The protein is Frizzled-10-A (fzd10-a) of Xenopus laevis (African clawed frog).